A 94-amino-acid chain; its full sequence is MLKPLGDRVIIEVVEKEEKTIGGIVLPDTAKEKPQQGKVVAVGTGRVTDEGKRIDLDVKENDLVIYSKYAGTEVKHDGKEYLIVRESDILAIVG.

The protein belongs to the GroES chaperonin family. In terms of assembly, heptamer of 7 subunits arranged in a ring. Interacts with the chaperonin GroEL.

The protein localises to the cytoplasm. Its function is as follows. Together with the chaperonin GroEL, plays an essential role in assisting protein folding. The GroEL-GroES system forms a nano-cage that allows encapsulation of the non-native substrate proteins and provides a physical environment optimized to promote and accelerate protein folding. GroES binds to the apical surface of the GroEL ring, thereby capping the opening of the GroEL channel. This is Co-chaperonin GroES from Exiguobacterium sp. (strain ATCC BAA-1283 / AT1b).